The following is a 473-amino-acid chain: O-methyltransferase aclU (473 aa).

S-adenosyl-L-methionine-binding positions include Asp-320 and 354–356; that span reads GDF. His-373 acts as the Proton acceptor in catalysis.

The protein belongs to the class I-like SAM-binding methyltransferase superfamily. Cation-independent O-methyltransferase family. COMT subfamily.

It functions in the pathway mycotoxin biosynthesis. Functionally, O-methyltransferase; part of the gene cluster that mediates the biosynthesis of aspirochlorine (or antibiotic A30641), an unusual halogenated spiro compound with distinctive antifungal properties due to selective inhibition of protein biosynthesis, and which is also active against bacteria, viruses, and murine tumor cells. The non-ribosomal peptide synthetase (NRPS) aclP is responsible the formation of the diketopiperazine (DKP) core from the condensation of 2 phenylalanine residues. One Phe residue is tailored into chlorotyrosine by hydroxylation and chlorination, whereas the second Phe undergoes an unprecedented C-C bond cleavage to be converted into glycine. After formation of the DKP, sulfur is incorporated into the DKP by conjugation with glutathione by aclG, followed by its stepwise degradation to the thiol by aclI, aclJ and aclK, and the dithiol oxidation by aclT. In addition, oxygenases (aclB, aclC, aclL and aclO) and O-methyltransferases (aclM and aclU) act as tailoring enzymes to produce the intermediate dechloroaspirochlorine. Ultimately, chlorination of dechloroaspirochlorine by the halogenase aclH is the last step in the aspirochlorine pathway. In Aspergillus oryzae (strain ATCC 42149 / RIB 40) (Yellow koji mold), this protein is O-methyltransferase aclU.